Reading from the N-terminus, the 184-residue chain is Endoribonuclease YbeY (184 aa).

Acidic residues-rich tracts occupy residues 1–11 and 19–29; these read MTVEVGADENP and DGAGDESDDED. Positions 1-38 are disordered; it reads MTVEVGADENPDFAHDETDGAGDESDDEDAQGRDPELD. The Zn(2+) site is built by histidine 146, histidine 150, and histidine 156.

It belongs to the endoribonuclease YbeY family. Zn(2+) is required as a cofactor.

It localises to the cytoplasm. Its function is as follows. Single strand-specific metallo-endoribonuclease involved in late-stage 70S ribosome quality control and in maturation of the 3' terminus of the 16S rRNA. The polypeptide is Endoribonuclease YbeY (Burkholderia pseudomallei (strain K96243)).